A 104-amino-acid chain; its full sequence is Iron-sulfur cluster assembly protein CyaY (104 aa).

The protein belongs to the frataxin family.

Involved in iron-sulfur (Fe-S) cluster assembly. May act as a regulator of Fe-S biogenesis. This chain is Iron-sulfur cluster assembly protein CyaY, found in Aliivibrio fischeri (strain MJ11) (Vibrio fischeri).